A 101-amino-acid chain; its full sequence is NADH-quinone oxidoreductase subunit K (101 aa).

Transmembrane regions (helical) follow at residues 4–24, 30–50, and 65–85; these read LEHYLTVAATLFVIGIFGLFL, IVLLMSIELMLLAVNINLVAF, and FVLTVAAAEAAIGLAILVCFF.

This sequence belongs to the complex I subunit 4L family. As to quaternary structure, NDH-1 is composed of 14 different subunits. Subunits NuoA, H, J, K, L, M, N constitute the membrane sector of the complex.

Its subcellular location is the cell inner membrane. It catalyses the reaction a quinone + NADH + 5 H(+)(in) = a quinol + NAD(+) + 4 H(+)(out). Its function is as follows. NDH-1 shuttles electrons from NADH, via FMN and iron-sulfur (Fe-S) centers, to quinones in the respiratory chain. The immediate electron acceptor for the enzyme in this species is believed to be ubiquinone. Couples the redox reaction to proton translocation (for every two electrons transferred, four hydrogen ions are translocated across the cytoplasmic membrane), and thus conserves the redox energy in a proton gradient. This chain is NADH-quinone oxidoreductase subunit K, found in Ruegeria pomeroyi (strain ATCC 700808 / DSM 15171 / DSS-3) (Silicibacter pomeroyi).